Here is a 247-residue protein sequence, read N- to C-terminus: tRNA pseudouridine synthase A 1 (247 aa).

The active-site Nucleophile is the Asp-53. A substrate-binding site is contributed by Tyr-111.

Belongs to the tRNA pseudouridine synthase TruA family. As to quaternary structure, homodimer.

It catalyses the reaction uridine(38/39/40) in tRNA = pseudouridine(38/39/40) in tRNA. Its function is as follows. Formation of pseudouridine at positions 38, 39 and 40 in the anticodon stem and loop of transfer RNAs. The chain is tRNA pseudouridine synthase A 1 from Bacillus cereus (strain ATCC 14579 / DSM 31 / CCUG 7414 / JCM 2152 / NBRC 15305 / NCIMB 9373 / NCTC 2599 / NRRL B-3711).